The primary structure comprises 155 residues: Ribonuclease H (155 aa).

In terms of domain architecture, RNase H type-1 spans 1-142; that stretch reads MLKQVEIFTD…CDELARAAAM (142 aa). The Mg(2+) site is built by Asp-10, Glu-48, Asp-70, and Asp-134.

Belongs to the RNase H family. In terms of assembly, monomer. It depends on Mg(2+) as a cofactor.

The protein localises to the cytoplasm. The enzyme catalyses Endonucleolytic cleavage to 5'-phosphomonoester.. Endonuclease that specifically degrades the RNA of RNA-DNA hybrids. The polypeptide is Ribonuclease H (Escherichia fergusonii (strain ATCC 35469 / DSM 13698 / CCUG 18766 / IAM 14443 / JCM 21226 / LMG 7866 / NBRC 102419 / NCTC 12128 / CDC 0568-73)).